A 429-amino-acid polypeptide reads, in one-letter code: Adenosylhomocysteinase (429 aa).

Substrate is bound by residues Thr-64, Asp-136, and Glu-161. 162–164 (TTT) contributes to the NAD(+) binding site. Substrate-binding residues include Lys-191 and Asp-195. NAD(+) contacts are provided by residues Asn-196, 225–230 (GYGWCG), Glu-248, Asn-283, 304–306 (SGH), and Asn-351.

It belongs to the adenosylhomocysteinase family. The cofactor is NAD(+).

It is found in the cytoplasm. The catalysed reaction is S-adenosyl-L-homocysteine + H2O = L-homocysteine + adenosine. The protein operates within amino-acid biosynthesis; L-homocysteine biosynthesis; L-homocysteine from S-adenosyl-L-homocysteine: step 1/1. Functionally, may play a key role in the regulation of the intracellular concentration of adenosylhomocysteine. This is Adenosylhomocysteinase from Thermosynechococcus vestitus (strain NIES-2133 / IAM M-273 / BP-1).